We begin with the raw amino-acid sequence, 118 residues long: Large ribosomal subunit protein bL19 (118 aa).

It belongs to the bacterial ribosomal protein bL19 family.

This protein is located at the 30S-50S ribosomal subunit interface and may play a role in the structure and function of the aminoacyl-tRNA binding site. This Marinobacter nauticus (strain ATCC 700491 / DSM 11845 / VT8) (Marinobacter aquaeolei) protein is Large ribosomal subunit protein bL19.